The chain runs to 215 residues: ATP-dependent Clp protease proteolytic subunit (215 aa).

Ser-115 serves as the catalytic Nucleophile. His-140 is a catalytic residue.

It belongs to the peptidase S14 family. In terms of assembly, fourteen ClpP subunits assemble into 2 heptameric rings which stack back to back to give a disk-like structure with a central cavity, resembling the structure of eukaryotic proteasomes.

It is found in the cytoplasm. The enzyme catalyses Hydrolysis of proteins to small peptides in the presence of ATP and magnesium. alpha-casein is the usual test substrate. In the absence of ATP, only oligopeptides shorter than five residues are hydrolyzed (such as succinyl-Leu-Tyr-|-NHMec, and Leu-Tyr-Leu-|-Tyr-Trp, in which cleavage of the -Tyr-|-Leu- and -Tyr-|-Trp bonds also occurs).. Functionally, cleaves peptides in various proteins in a process that requires ATP hydrolysis. Has a chymotrypsin-like activity. Plays a major role in the degradation of misfolded proteins. This Anaplasma marginale (strain Florida) protein is ATP-dependent Clp protease proteolytic subunit.